We begin with the raw amino-acid sequence, 126 residues long: Histone H2B type 1-K (126 aa).

Low complexity predominate over residues 1–12; sequence MPEPAKSAPAPK. A disordered region spans residues 1 to 36; the sequence is MPEPAKSAPAPKKGSKKAVTKAQKIDGKKRKRSRKE. Position 2 is an N-acetylproline (Pro-2). The residue at position 3 (Glu-3) is an ADP-ribosyl glutamic acid. Lys-6 bears the N6-(2-hydroxyisobutyryl)lysine; alternate mark. Lys-6 carries the post-translational modification N6-(beta-hydroxybutyryl)lysine; alternate. Lys-6 bears the N6-acetyllysine; alternate mark. Lys-6 is modified (N6-butyryllysine; alternate). Position 6 is an N6-crotonyllysine; alternate (Lys-6). Lys-6 bears the N6-lactoyllysine; alternate mark. Lys-6 participates in a covalent cross-link: Glycyl lysine isopeptide (Lys-Gly) (interchain with G-Cter in SUMO2); alternate. The residue at position 7 (Ser-7) is an ADP-ribosylserine. The residue at position 12 (Lys-12) is an N6-(beta-hydroxybutyryl)lysine; alternate. An N6-acetyllysine; alternate mark is found at Lys-12 and Lys-13. N6-crotonyllysine; alternate is present on residues Lys-12 and Lys-13. Lys-12 is modified (N6-lactoyllysine; alternate). Lys-13 bears the N6-(2-hydroxyisobutyryl)lysine; alternate mark. Ser-15 carries the phosphoserine; by STK4/MST1 modification. An N6-acetyllysine; alternate mark is found at Lys-16, Lys-17, Lys-21, and Lys-24. N6-crotonyllysine; alternate occurs at positions 16, 17, 21, 24, and 35. Residues Lys-16, Lys-17, Lys-21, and Lys-24 each carry the N6-lactoyllysine; alternate modification. Lys-17 bears the N6-glutaryllysine; alternate mark. N6-(2-hydroxyisobutyryl)lysine; alternate is present on residues Lys-21, Lys-24, and Lys-35. At Lys-21 the chain carries N6-(beta-hydroxybutyryl)lysine; alternate. Lys-21 is modified (N6-butyryllysine; alternate). Lys-21 participates in a covalent cross-link: Glycyl lysine isopeptide (Lys-Gly) (interchain with G-Cter in SUMO2); alternate. Lys-35 is modified (N6-(beta-hydroxybutyryl)lysine; alternate). Lys-35 carries the post-translational modification N6-glutaryllysine; alternate. Lys-35 carries the post-translational modification N6-succinyllysine; alternate. Residue Lys-35 forms a Glycyl lysine isopeptide (Lys-Gly) (interchain with G-Cter in ubiquitin); alternate linkage. At Glu-36 the chain carries PolyADP-ribosyl glutamic acid. Ser-37 is modified (phosphoserine; by AMPK). N6-(2-hydroxyisobutyryl)lysine; alternate occurs at positions 44, 47, and 58. An N6-lactoyllysine; alternate modification is found at Lys-44. 2 positions are modified to N6-glutaryllysine; alternate: Lys-44 and Lys-47. An N6-methyllysine; alternate modification is found at Lys-47. The residue at position 58 (Lys-58) is an N6,N6-dimethyllysine; alternate. Position 80 is a dimethylated arginine (Arg-80). Lys-86 carries the post-translational modification N6-(2-hydroxyisobutyryl)lysine; alternate. Lys-86 carries the N6-acetyllysine; alternate modification. Lys-86 is modified (N6-lactoyllysine; alternate). N6,N6,N6-trimethyllysine; alternate is present on Lys-86. Residues Arg-87 and Arg-93 each carry the omega-N-methylarginine modification. At Lys-109 the chain carries N6-(2-hydroxyisobutyryl)lysine; alternate. An N6-lactoyllysine; alternate modification is found at Lys-109. Residue Lys-109 is modified to N6-glutaryllysine; alternate. Lys-109 bears the N6-methyllysine; alternate mark. Ser-113 is a glycosylation site (O-linked (GlcNAc) serine). Thr-116 carries the post-translational modification Phosphothreonine. N6-(2-hydroxyisobutyryl)lysine; alternate occurs at positions 117 and 121. At Lys-117 the chain carries N6-(beta-hydroxybutyryl)lysine; alternate. N6-lactoyllysine; alternate occurs at positions 117 and 121. Lys-117 and Lys-121 each carry N6-glutaryllysine; alternate. Lys-117 and Lys-121 each carry N6-succinyllysine; alternate. The residue at position 117 (Lys-117) is an N6-methylated lysine; alternate. Lys-121 participates in a covalent cross-link: Glycyl lysine isopeptide (Lys-Gly) (interchain with G-Cter in ubiquitin); alternate.

It belongs to the histone H2B family. As to quaternary structure, the nucleosome is a histone octamer containing two molecules each of H2A, H2B, H3 and H4 assembled in one H3-H4 heterotetramer and two H2A-H2B heterodimers. The octamer wraps approximately 147 bp of DNA. In terms of processing, monoubiquitination at Lys-35 (H2BK34Ub) by the MSL1/MSL2 dimer is required for histone H3 'Lys-4' (H3K4me) and 'Lys-79' (H3K79me) methylation and transcription activation at specific gene loci, such as HOXA9 and MEIS1 loci. Similarly, monoubiquitination at Lys-121 (H2BK120Ub) by the RNF20/40 complex gives a specific tag for epigenetic transcriptional activation and is also prerequisite for histone H3 'Lys-4' and 'Lys-79' methylation. It also functions cooperatively with the FACT dimer to stimulate elongation by RNA polymerase II. H2BK120Ub also acts as a regulator of mRNA splicing: deubiquitination by USP49 is required for efficient cotranscriptional splicing of a large set of exons. Phosphorylated on Ser-15 (H2BS14ph) by STK4/MST1 during apoptosis; which facilitates apoptotic chromatin condensation. Also phosphorylated on Ser-15 in response to DNA double strand breaks (DSBs), and in correlation with somatic hypermutation and immunoglobulin class-switch recombination. Phosphorylation at Ser-37 (H2BS36ph) by AMPK in response to stress promotes transcription. Post-translationally, glcNAcylation at Ser-113 promotes monoubiquitination of Lys-121. It fluctuates in response to extracellular glucose, and associates with transcribed genes. In terms of processing, ADP-ribosylated by PARP1 or PARP2 on Ser-7 (H2BS6ADPr) in response to DNA damage. H2BS6ADPr promotes recruitment of CHD1L. Mono-ADP-ribosylated on Glu-3 (H2BE2ADPr) by PARP3 in response to single-strand breaks. Poly ADP-ribosylation on Glu-36 (H2BE35ADPr) by PARP1 regulates adipogenesis: it inhibits phosphorylation at Ser-37 (H2BS36ph), thereby blocking expression of pro-adipogenetic genes. Crotonylation (Kcr) is specifically present in male germ cells and marks testis-specific genes in post-meiotic cells, including X-linked genes that escape sex chromosome inactivation in haploid cells. Crotonylation marks active promoters and enhancers and confers resistance to transcriptional repressors. It is also associated with post-meiotically activated genes on autosomes. Post-translationally, lactylated in macrophages by EP300/P300 by using lactoyl-CoA directly derived from endogenous or exogenous lactate, leading to stimulates gene transcription.

The protein resides in the nucleus. It localises to the chromosome. Its function is as follows. Core component of nucleosome. Nucleosomes wrap and compact DNA into chromatin, limiting DNA accessibility to the cellular machineries which require DNA as a template. Histones thereby play a central role in transcription regulation, DNA repair, DNA replication and chromosomal stability. DNA accessibility is regulated via a complex set of post-translational modifications of histones, also called histone code, and nucleosome remodeling. The sequence is that of Histone H2B type 1-K from Bos taurus (Bovine).